We begin with the raw amino-acid sequence, 431 residues long: MNSHYQNHSLENFFSTNLSATDDAVFAGIQAEFTRQNEQIELIASENIVSKAVMQAQGTCLTNKYAEGYPGRRYYGGCEHVDTVEAIAIERAKKLFNCEYANVQPHSGAQANGAVKLALLQPGDTIMGMSLDAGGHLTHGARPALSGKWFNAVQYGVDKETLEINYDDVRALAVEHKPKMIIAGGSAIPRVIDFAKFREIADEVGAILMVDMAHIAGLIATGAHPSPLPHAHVVTTTTHKTLRGPRGGMILTNHEEIIKKINSAVFPGLQGGPLMHVIAAKAVAFGEALGPEFKTYIDSVINNAKVLAEVLQTRGCDIVTGGTDTHLMLVDLRPKGLKGNKAEEALERAGITCNKNGIPFDTEKPMITSGVRLGTPAGTSRGFGAEEFKLIGHWIGDVLDGLVENPEGNAEVEQRVRKEVKALCSRFPLYQ.

Residues Leu-131 and 135–137 (GHL) contribute to the (6S)-5,6,7,8-tetrahydrofolate site. Residue Lys-240 is modified to N6-(pyridoxal phosphate)lysine. Glu-256 contributes to the (6S)-5,6,7,8-tetrahydrofolate binding site.

Belongs to the SHMT family. In terms of assembly, homodimer. Pyridoxal 5'-phosphate serves as cofactor.

It localises to the cytoplasm. It carries out the reaction (6R)-5,10-methylene-5,6,7,8-tetrahydrofolate + glycine + H2O = (6S)-5,6,7,8-tetrahydrofolate + L-serine. It participates in one-carbon metabolism; tetrahydrofolate interconversion. Its pathway is amino-acid biosynthesis; glycine biosynthesis; glycine from L-serine: step 1/1. Functionally, catalyzes the reversible interconversion of serine and glycine with tetrahydrofolate (THF) serving as the one-carbon carrier. This reaction serves as the major source of one-carbon groups required for the biosynthesis of purines, thymidylate, methionine, and other important biomolecules. Also exhibits THF-independent aldolase activity toward beta-hydroxyamino acids, producing glycine and aldehydes, via a retro-aldol mechanism. The chain is Serine hydroxymethyltransferase 2 from Vibrio vulnificus (strain YJ016).